The sequence spans 367 residues: Viral cathepsin (367 aa).

Positions Met1–Cys25 are cleaved as a signal peptide. The propeptide at Asp26 to Leu156 is activation peptide. N-linked (GlcNAc...) asparagine; by host glycans are attached at residues Asn103 and Asn135. Intrachain disulfides connect Cys177/Cys218, Cys211/Cys251, and Cys306/Cys354. The active site involves Cys180. Catalysis depends on residues His313 and Asn333.

It belongs to the peptidase C1 family. In terms of processing, synthesized as an inactive proenzyme and activated by proteolytic removal of the inhibitory propeptide.

It catalyses the reaction Endopeptidase of broad specificity, hydrolyzing substrates of both cathepsin L and cathepsin B.. In terms of biological role, cysteine protease that plays an essential role in host liquefaction to facilitate horizontal transmission of the virus. May participate in the degradation of foreign protein expressed by the baculovirus system. In Lepidoptera (butterflies and moths), this protein is Viral cathepsin (VCATH).